Reading from the N-terminus, the 338-residue chain is MADLKAHIAKVASGAALSFAEAREAFGIIMSGEATPSQIGGFLMALRVRGETVDEISGAVDTMRSKMLPVTAPAEAVDIVGTGGDASGTYNVSTCAAFIVAGCGVPVAKHGNRALSSKSGAADSLVALGVNIELGPDQIAACIAEAGVGFMFAPSHHAAMRHVGPTRVELGTRTIFNLLGPLSNPAGVKRQLVGVFSAQWVEPLAHVLRQLGTEKAWVVHGDGLDEMTTAGVTRVASLEYGEVRTFEITPEEVGLQRSAAAALKGGDGEYNGKALRRVLEGERNAYRDIAVLNAGGALIVAGKAETLKDAVALASESIESGRALAALEKLVEVSNRKP.

Residues glycine 81, 84–85, threonine 89, 91–94, 109–117, and alanine 121 each bind 5-phospho-alpha-D-ribose 1-diphosphate; these read GD, NVST, and KHGNRALSS. Residue glycine 81 participates in anthranilate binding. Mg(2+) is bound at residue serine 93. Anthranilate is bound at residue asparagine 112. Residue arginine 167 participates in anthranilate binding. 2 residues coordinate Mg(2+): aspartate 225 and glutamate 226.

This sequence belongs to the anthranilate phosphoribosyltransferase family. In terms of assembly, homodimer. Mg(2+) is required as a cofactor.

The catalysed reaction is N-(5-phospho-beta-D-ribosyl)anthranilate + diphosphate = 5-phospho-alpha-D-ribose 1-diphosphate + anthranilate. It participates in amino-acid biosynthesis; L-tryptophan biosynthesis; L-tryptophan from chorismate: step 2/5. Catalyzes the transfer of the phosphoribosyl group of 5-phosphorylribose-1-pyrophosphate (PRPP) to anthranilate to yield N-(5'-phosphoribosyl)-anthranilate (PRA). The sequence is that of Anthranilate phosphoribosyltransferase from Chelativorans sp. (strain BNC1).